Consider the following 545-residue polypeptide: CTP synthase (545 aa).

The amidoligase domain stretch occupies residues methionine 1–leucine 266. Serine 14 serves as a coordination point for CTP. Serine 14 provides a ligand contact to UTP. ATP contacts are provided by residues serine 15–isoleucine 20 and aspartate 72. Positions 72 and 140 each coordinate Mg(2+). Residues aspartate 147–glutamate 149, lysine 187–glutamine 192, and lysine 223 each bind CTP. Residues lysine 187–glutamine 192 and lysine 223 contribute to the UTP site. Lysine 239–valine 241 contributes to the ATP binding site. Residues valine 291–arginine 542 enclose the Glutamine amidotransferase type-1 domain. L-glutamine is bound at residue glycine 352. Residue cysteine 379 is the Nucleophile; for glutamine hydrolysis of the active site. L-glutamine is bound by residues leucine 380 to glutamine 383, glutamate 403, and arginine 470. Catalysis depends on residues histidine 515 and glutamate 517.

It belongs to the CTP synthase family. As to quaternary structure, homotetramer.

The catalysed reaction is UTP + L-glutamine + ATP + H2O = CTP + L-glutamate + ADP + phosphate + 2 H(+). The enzyme catalyses L-glutamine + H2O = L-glutamate + NH4(+). It catalyses the reaction UTP + NH4(+) + ATP = CTP + ADP + phosphate + 2 H(+). The protein operates within pyrimidine metabolism; CTP biosynthesis via de novo pathway; CTP from UDP: step 2/2. With respect to regulation, allosterically activated by GTP, when glutamine is the substrate; GTP has no effect on the reaction when ammonia is the substrate. The allosteric effector GTP functions by stabilizing the protein conformation that binds the tetrahedral intermediate(s) formed during glutamine hydrolysis. Inhibited by the product CTP, via allosteric rather than competitive inhibition. Functionally, catalyzes the ATP-dependent amination of UTP to CTP with either L-glutamine or ammonia as the source of nitrogen. Regulates intracellular CTP levels through interactions with the four ribonucleotide triphosphates. This Shewanella baltica (strain OS155 / ATCC BAA-1091) protein is CTP synthase.